Here is a 345-residue protein sequence, read N- to C-terminus: Phosphate import ATP-binding protein PstB 2 (345 aa).

The segment at 1–57 (MSDTPQSEPRRSDDRSGADDATAAAAGSTDAAAAAVSSKTGGIAGPPGGPGEVDGDE) is disordered. Over residues 8-18 (EPRRSDDRSGA) the composition is skewed to basic and acidic residues. Residues 19 to 35 (DDATAAAAGSTDAAAAA) show a composition bias toward low complexity. Residues 42–52 (GIAGPPGGPGE) show a composition bias toward gly residues. An ABC transporter domain is found at 86-340 (VSVSDLDTYY…PQSQRVEDYV (255 aa)). Residue 118–125 (GPSGCGKS) participates in ATP binding.

This sequence belongs to the ABC transporter superfamily. Phosphate importer (TC 3.A.1.7) family. The complex is composed of two ATP-binding proteins (PstB), two transmembrane proteins (PstC and PstA) and a solute-binding protein (PstS).

The protein resides in the cell membrane. The catalysed reaction is phosphate(out) + ATP + H2O = ADP + 2 phosphate(in) + H(+). Its function is as follows. Part of the ABC transporter complex PstSACB involved in phosphate import. Responsible for energy coupling to the transport system. In Halobacterium salinarum (strain ATCC 700922 / JCM 11081 / NRC-1) (Halobacterium halobium), this protein is Phosphate import ATP-binding protein PstB 2.